The primary structure comprises 1037 residues: Multidrug resistance protein MdtF (1037 aa).

At 1–9 the chain is on the cytoplasmic side; that stretch reads MANYFIDRP. Residues 10 to 28 traverse the membrane as a helical segment; the sequence is VFAWVLAIIMMLAGGLAIM. Over 29 to 339 the chain is Periplasmic; that stretch reads NLPVAQYPQI…TPFIEISIQE (311 aa). Residues 340–359 traverse the membrane as a helical segment; the sequence is VFKTLVEAIILVFLVMYLFL. At 360-365 the chain is on the cytoplasmic side; the sequence is QNFRAT. A helical transmembrane segment spans residues 366 to 385; it reads IIPTIAVPVVILGTFAILSA. Residues 386-391 are Periplasmic-facing; that stretch reads VGFTIN. Residues 392–413 traverse the membrane as a helical segment; the sequence is TLTMFGMVLAIGLLVDDAIVVV. The Cytoplasmic portion of the chain corresponds to 414 to 441; the sequence is ENVERVIAEDKLPPKEATHKSMGQIQRA. A helical membrane pass occupies residues 442–460; that stretch reads LVGIAVVLSAVFMPMAFMS. The Periplasmic segment spans residues 461–473; sequence GATGEIYRQFSIT. A helical transmembrane segment spans residues 474–496; that stretch reads LISSMLLSVFVAMSLTPALCATI. Residues 497–536 lie on the Cytoplasmic side of the membrane; the sequence is LKAAPEGGHKPNALFARFNTLFEKSTQHYTDSTRSLLRCT. The chain crosses the membrane as a helical span at residues 537-555; that stretch reads GRYMVVYLLICAGMAVLFL. Residues 556–870 lie on the Periplasmic side of the membrane; sequence RTPTSFLPEE…SYQEALSSNQ (315 aa). A helical membrane pass occupies residues 871-890; that stretch reads APALYAISLVVVFLALAALY. At 891-896 the chain is on the cytoplasmic side; that stretch reads ESWSIP. A helical membrane pass occupies residues 897 to 916; it reads FSVMLVVPLGVVGALLATDL. Over 917 to 922 the chain is Periplasmic; it reads RGLSND. The helical transmembrane segment at 923-944 threads the bilayer; sequence VYFQVGLLTTIGLSAKNAILIV. The Cytoplasmic segment spans residues 945 to 972; that stretch reads EFAVEMMQKEGKTPIEAIIEAARMRLRP. A helical membrane pass occupies residues 973–991; that stretch reads ILMTSLAFILGVLPLVISH. The Periplasmic segment spans residues 992 to 1004; sequence GAGSGAQNAVGTG. The chain crosses the membrane as a helical span at residues 1005 to 1027; the sequence is VMGGMFAATVLAIYFVPVFFVVV. At 1028-1037 the chain is on the cytoplasmic side; it reads EHLFARFKKA.

The protein belongs to the resistance-nodulation-cell division (RND) (TC 2.A.6) family. As to quaternary structure, homotrimer. Part of the tripartite efflux system MdtEF-TolC, which is composed of an inner membrane transporter, MdtF, a membrane fusion protein, MdtE, and an outer membrane component, TolC. The complex forms a large protein conduit and can translocate molecules across both the inner and outer membranes.

It is found in the cell inner membrane. In terms of biological role, part of the tripartite efflux system MdtEF-TolC, which confers resistance to compounds such as rhodamine 6G, erythromycin, doxorubicin, ethidium bromide, TPP, SDS, deoxycholate, crystal violet and benzalkonium. The polypeptide is Multidrug resistance protein MdtF (mdtF) (Escherichia coli (strain K12)).